The primary structure comprises 162 residues: uncharacterized protein (162 aa).

5 helical membrane-spanning segments follow: residues 15 to 40, 47 to 66, 76 to 98, 105 to 124, and 128 to 150; these read TIYSIVGIFLIIILDVTVAVALYFLL, ISMLMSLFRIVYAAIFTTAL, YSILDLGYIFFGIHLFLLGFLVY, KWLGALIFIASTGYIIDPLL, and GYAVEIGMYTFFGEVLFAFWLVI.

It localises to the cell membrane. This is an uncharacterized protein from Archaeoglobus fulgidus (strain ATCC 49558 / DSM 4304 / JCM 9628 / NBRC 100126 / VC-16).